The chain runs to 184 residues: GTPase RhebL1 (184 aa).

Residues serine 16–serine 21, leucine 32–threonine 38, glycine 63, asparagine 119–aspartate 122, and serine 149–alanine 150 contribute to the GTP site. The Effector region signature appears at tyrosine 35–tyrosine 43. Threonine 38 is a binding site for Mg(2+). Cysteine 181 is subject to Cysteine methyl ester. A lipid anchor (S-farnesyl cysteine) is attached at cysteine 181. A propeptide spans tyrosine 182–methionine 184 (removed in mature form).

The protein belongs to the small GTPase superfamily. Rheb family. As to quaternary structure, interacts with MTOR.

It is found in the endomembrane system. The protein resides in the cytoplasm. The catalysed reaction is GTP + H2O = GDP + phosphate + H(+). In terms of biological role, binds GTP and exhibits intrinsic GTPase activity. May activate NF-kappa-B-mediated gene transcription. Promotes signal transduction through MTOR, activates RPS6KB1, and is a downstream target of the small GTPase-activating proteins TSC1 and TSC2. In Mus musculus (Mouse), this protein is GTPase RhebL1 (Rhebl1).